A 288-amino-acid chain; its full sequence is Dysbindin protein homolog (288 aa).

A coiled-coil region spans residues 147–239; the sequence is AQLQNSSQVL…QRERQAVFDD (93 aa).

The protein belongs to the dysbindin family. In terms of assembly, component of the biogenesis of lysosome-related organelles complex-1 (BLOC-1) composed of Blos1, Blos2, Blos3, Blos4, Dysb, Muted, Pldn and Snapin. Interacts with Pldn and Snapin.

Functionally, component of the biogenesis of lysosome-related organelles complex-1 (BLOC-1) involved in pigment granule biogenesis and membrane trafficking in synapses. In response to high synaptic activity at neuromuscular junctions, stabilizes Pldn protein levels and, together with Pldn, plays a role in promoting efficient synaptic vesicle recycling and re-formation through early endosomes. The chain is Dysbindin protein homolog from Drosophila melanogaster (Fruit fly).